A 428-amino-acid chain; its full sequence is MAENDVDNELLDYEDDEVETAAGGDGAEAPAKKDVKGSYVSIHSSGFRDFLLKPELLRAIVDCGFEHPSEVQHECIPQAILGMDVLCQAKSGMGKTAVFVLATLQQLEPVTGQVSVLVMCHTRELAFQISKEYERFSKYMPSVKVAVFFGGLSIKKDEEVLKKNCPHIVVGTPGRILALARNKSLNLKHIKHFILDECDKMLEQLDMRRDVQEIFRMTPHEKQVMMFSATLSKEIRPVCRKFMQDPMEIFVDDETKLTLHGLQQYYVKLKDNEKNRKLFDLLDVLEFNQVVIFVKSVQRCIALAQLLVEQNFPAIAIHRGMPQEERLSRYQQFKDFQRRILVATNLFGRGMDIERVNIAFNYDMPEDSDTYLHRVARAGRFGTKGLAITFVSDENDAKILNDVQDRFEVNISELPDEIDISSYIEQTR.

Positions 1–19 are enriched in acidic residues; that stretch reads MAENDVDNELLDYEDDEVE. Residues 1–31 are disordered; it reads MAENDVDNELLDYEDDEVETAAGGDGAEAPA. At Ala2 the chain carries N-acetylalanine. Position 36 is an N6-acetyllysine; alternate (Lys36). Residue Lys36 forms a Glycyl lysine isopeptide (Lys-Gly) (interchain with G-Cter in SUMO2); alternate linkage. Phosphoserine is present on residues Ser38 and Ser41. The short motif at 45–73 is the Q motif element; it reads SGFRDFLLKPELLRAIVDCGFEHPSEVQH. A Helicase ATP-binding domain is found at 76–249; sequence IPQAILGMDV…RKFMQDPMEI (174 aa). 89-96 contacts ATP; the sequence is AKSGMGKT. Thr172 is subject to Phosphothreonine. Positions 196–199 match the DECD box motif; it reads DECD. Residues 261–422 enclose the Helicase C-terminal domain; it reads GLQQYYVKLK…ELPDEIDISS (162 aa).

The protein belongs to the DEAD box helicase family. DECD subfamily. As to quaternary structure, homodimer, and heterodimer with DDX39A. DDX39B interacts with the THO subcomplex to form the THO-DDX39B complex which multimerizes into a 28-subunit tetrameric assembly. Component of the transcription/export (TREX) complex at least composed of ALYREF/THOC4, DDX39B, SARNP/CIP29, CHTOP and the THO subcomplex; in the complex interacts with THOC2. THOC1-THOC2-THOC3-DDX39B subcomplex is sufficient for the interaction with export factor NXF1-NXT1. TREX seems to have a dynamic structure involving ATP-dependent remodeling. Within the TREX complex bridges ALYREF/THOC4 and the THO subcomplex, and, in a ATP-dependent manner, ALYREF/THOC4 and SARNP/CIP29. Component of the spliceosome. Interacts directly with U2AF2. Interacts with RBM8A, RNPS1 and SRRM1, FYTTD1/UIF, THOC1, MX1 and POLDIP3. Interacts with LUZP4. Interacts with SARNP/CIP29 (via the C-terminal domain); the interaction is direct and facilitates RNA binding of DDX39B.

The protein resides in the nucleus. It localises to the nucleus speckle. Its subcellular location is the cytoplasm. The enzyme catalyses ATP + H2O = ADP + phosphate + H(+). In terms of biological role, involved in nuclear export of spliced and unspliced mRNA. Component of the TREX complex which is thought to couple mRNA transcription, processing and nuclear export, and specifically associates with spliced mRNA and not with unspliced pre-mRNA. The TREX complex is recruited to spliced mRNAs by a transcription-independent mechanism, binds to mRNA upstream of the exon-junction complex (EJC) and is recruited in a splicing- and cap-dependent manner to a region near the 5' end of the mRNA where it functions in mRNA export to the cytoplasm via the TAP/NXF1 pathway. The THOC1-THOC2-THOC3 core complex alone is sufficient to promote ATPase activity of DDX39B; in the complex THOC2 is the only component that directly interacts with DDX39B. Associates with SARNP/CIP29, which facilitates RNA binding of DDX39B and likely plays a role in mRNA export. May undergo several rounds of ATP hydrolysis during assembly of TREX to drive subsequent loading of components such as ALYREF/THOC4 and CHTOP onto mRNA. Also associates with pre-mRNA independent of ALYREF/THOC4. Involved in the nuclear export of intronless mRNA; the ATP-bound form is proposed to recruit export adapter ALYREF/THOC4 to intronless mRNA; its ATPase activity is cooperatively stimulated by RNA and ALYREF/THOC4 and ATP hydrolysis is thought to trigger the dissociation from RNA to allow the association of ALYREF/THOC4 and the NXF1-NXT1 heterodimer. Involved in transcription elongation and genome stability. Splice factor that is required for the first ATP-dependent step in spliceosome assembly and for the interaction of U2 snRNP with the branchpoint. Has both RNA-stimulated ATP binding/hydrolysis activity and ATP-dependent RNA unwinding activity. Even with the stimulation of RNA, the ATPase activity is weak. Can only hydrolyze ATP but not other NTPs. The RNA stimulation of ATPase activity does not have a strong preference for the sequence and length of the RNA. However, ssRNA stimulates the ATPase activity much more strongly than dsRNA. Can unwind 5' or 3' overhangs or blunt end RNA duplexes in vitro. The ATPase and helicase activities are not influenced by U2AF2; the effect of ALYREF/THOC4 is reported conflictingly. The polypeptide is Spliceosome RNA helicase DDX39B (DDX39B) (Bos taurus (Bovine)).